A 523-amino-acid chain; its full sequence is Tryptamine 5-hydroxylase (523 aa).

The chain crosses the membrane as a helical span at residues 5–25; it reads MASTMSLALLVLSAAYVLVAL. C453 is a heme binding site.

This sequence belongs to the cytochrome P450 family. Heme is required as a cofactor.

It localises to the endoplasmic reticulum membrane. It catalyses the reaction tryptamine + reduced [NADPH--hemoprotein reductase] + O2 = serotonin + oxidized [NADPH--hemoprotein reductase] + H2O + H(+). In terms of biological role, involved in serotonin biosynthesis. Catalyzes the conversion of tryptamine to serotonin. Accumulation of serotonin may play a role in innate immunity. This chain is Tryptamine 5-hydroxylase, found in Oryza sativa subsp. japonica (Rice).